Here is a 455-residue protein sequence, read N- to C-terminus: 1,4-beta-D-glucan cellobiohydrolase C (455 aa).

Residues 1–19 form the signal peptide; sequence MHYSASGLALAFLLPAIQA. Positions 20 to 55 constitute a CBM1 domain; sequence QQTLYGQCGGSGWTGATSCVAGAACSTLNQWYAQCL. 2 cysteine pairs are disulfide-bonded: Cys-27-Cys-44 and Cys-38-Cys-54. Residues 59–92 are thr-rich linker; it reads TTTSTTLTTTTSSVTTTSNPGSTTTTSSVTVTAT. The interval 66 to 86 is disordered; the sequence is TTTTSSVTTTSNPGSTTTTSS. Positions 93-450 are catalytic; the sequence is ASGNPFSGYQ…QAYFVQLLQN (358 aa). Residue Asp-185 is part of the active site. 2 cysteine pairs are disulfide-bonded: Cys-186/Cys-245 and Cys-377/Cys-424. Asp-231 acts as the Proton donor in catalysis. The Nucleophile role is filled by Asp-410.

The protein belongs to the glycosyl hydrolase 6 (cellulase B) family.

The protein localises to the secreted. It carries out the reaction Hydrolysis of (1-&gt;4)-beta-D-glucosidic linkages in cellulose and cellotetraose, releasing cellobiose from the non-reducing ends of the chains.. Functionally, the biological conversion of cellulose to glucose generally requires three types of hydrolytic enzymes: (1) Endoglucanases which cut internal beta-1,4-glucosidic bonds; (2) Exocellobiohydrolases that cut the disaccharide cellobiose from the non-reducing end of the cellulose polymer chain; (3) Beta-1,4-glucosidases which hydrolyze the cellobiose and other short cello-oligosaccharides to glucose. Active against carboxymethylcellulose, beta-glucan and lichenan. The protein is 1,4-beta-D-glucan cellobiohydrolase C (cbhC) of Emericella nidulans (strain FGSC A4 / ATCC 38163 / CBS 112.46 / NRRL 194 / M139) (Aspergillus nidulans).